Consider the following 479-residue polypeptide: Calcium/calmodulin-dependent protein kinase type II delta chain (479 aa).

The 259-residue stretch at 14 to 272 (YQLFEELGKG…ASEALKHPWI (259 aa)) folds into the Protein kinase domain. ATP-binding positions include 20 to 28 (LGKGAFSVV) and Lys43. The active-site Proton acceptor is the Asp136. Thr287 is modified (phosphothreonine). Phosphoserine is present on residues Ser315 and Ser319. Thr337 carries the post-translational modification Phosphothreonine.

Belongs to the protein kinase superfamily. CAMK Ser/Thr protein kinase family. CaMK subfamily. CAMK2 is composed of four different chains: alpha, beta, gamma, and delta. The different isoforms assemble into homo- or heteromultimeric holoenzymes composed of 8 to 12 subunits.

The catalysed reaction is L-seryl-[protein] + ATP = O-phospho-L-seryl-[protein] + ADP + H(+). It catalyses the reaction L-threonyl-[protein] + ATP = O-phospho-L-threonyl-[protein] + ADP + H(+). Its activity is regulated as follows. Autophosphorylation of CAMK2 plays an important role in the regulation of the kinase activity. Functionally, caM-kinase II (CAMK2) is a prominent kinase in the central nervous system. The chain is Calcium/calmodulin-dependent protein kinase type II delta chain (CAMK2D) from Gallus gallus (Chicken).